Consider the following 251-residue polypeptide: Segregation and condensation protein A (251 aa).

The protein belongs to the ScpA family. As to quaternary structure, component of a cohesin-like complex composed of ScpA, ScpB and the Smc homodimer, in which ScpA and ScpB bind to the head domain of Smc. The presence of the three proteins is required for the association of the complex with DNA.

The protein localises to the cytoplasm. Its function is as follows. Participates in chromosomal partition during cell division. May act via the formation of a condensin-like complex containing Smc and ScpB that pull DNA away from mid-cell into both cell halves. The polypeptide is Segregation and condensation protein A (Exiguobacterium sibiricum (strain DSM 17290 / CCUG 55495 / CIP 109462 / JCM 13490 / 255-15)).